We begin with the raw amino-acid sequence, 237 residues long: Uridylate kinase (237 aa).

12-15 (KLSG) lines the ATP pocket. Residues 20-25 (GENGFG) are involved in allosteric activation by GTP. Gly-54 serves as a coordination point for UMP. Residues Gly-55 and Arg-59 each contribute to the ATP site. UMP-binding positions include Asp-72 and 133 to 140 (TGNPYFST). Positions 166 and 169 each coordinate ATP.

It belongs to the UMP kinase family. As to quaternary structure, homohexamer.

It localises to the cytoplasm. The catalysed reaction is UMP + ATP = UDP + ADP. It participates in pyrimidine metabolism; CTP biosynthesis via de novo pathway; UDP from UMP (UMPK route): step 1/1. Allosterically activated by GTP. Inhibited by UTP. Catalyzes the reversible phosphorylation of UMP to UDP. This Clostridium perfringens (strain SM101 / Type A) protein is Uridylate kinase.